Consider the following 458-residue polypeptide: tRNA modification GTPase MnmE (458 aa).

Residues arginine 22, glutamate 84, and arginine 123 each coordinate (6S)-5-formyl-5,6,7,8-tetrahydrofolate. The TrmE-type G domain occupies 220-379 (GIATAIIGRP…LEKAIADLFF (160 aa)). Asparagine 230 contacts K(+). Residues 230–235 (NVGKSS), 249–255 (TDIAGTT), and 274–277 (DTAG) contribute to the GTP site. Serine 234 contributes to the Mg(2+) binding site. Threonine 249, isoleucine 251, and threonine 254 together coordinate K(+). A Mg(2+)-binding site is contributed by threonine 255. A (6S)-5-formyl-5,6,7,8-tetrahydrofolate-binding site is contributed by lysine 458.

Belongs to the TRAFAC class TrmE-Era-EngA-EngB-Septin-like GTPase superfamily. TrmE GTPase family. As to quaternary structure, homodimer. Heterotetramer of two MnmE and two MnmG subunits. It depends on K(+) as a cofactor.

It localises to the cytoplasm. Exhibits a very high intrinsic GTPase hydrolysis rate. Involved in the addition of a carboxymethylaminomethyl (cmnm) group at the wobble position (U34) of certain tRNAs, forming tRNA-cmnm(5)s(2)U34. The protein is tRNA modification GTPase MnmE of Bacillus cereus (strain ATCC 14579 / DSM 31 / CCUG 7414 / JCM 2152 / NBRC 15305 / NCIMB 9373 / NCTC 2599 / NRRL B-3711).